Reading from the N-terminus, the 402-residue chain is CMP-sialic acid transporter 3 (402 aa).

Residues 1–42 are Cytoplasmic-facing; sequence MSGEVECRVCHAKVQVPMAAAAVSKAYDIHRSSVSSRQRALN. Residues 43 to 63 form a helical membrane-spanning segment; the sequence is VLLVSGDCVLAGLQPILVYMC. Topologically, residues 64–73 are lumenal; it reads KVDGKFKFSP. The chain crosses the membrane as a helical span at residues 74–94; sequence VSVNFLTEITKIIFAIIMLCI. Topologically, residues 95–118 are cytoplasmic; it reads QARRLKVGEKPFLTVSTFMQAARN. A helical membrane pass occupies residues 119–139; that stretch reads NVLLAVPALFYAINNYMKFVM. Over 140–146 the chain is Lumenal; that stretch reads QLYFNPA. Residues 147–167 form a helical membrane-spanning segment; the sequence is TVKMLGNLKVLVIAVLLKVIM. Topologically, residues 168-170 are cytoplasmic; it reads RRR. Residues 171-191 traverse the membrane as a helical segment; sequence FSTIQWEALALLLIGISVNQL. Topologically, residues 192 to 202 are lumenal; sequence KSLPEGSSTLG. Residues 203–223 traverse the membrane as a helical segment; that stretch reads LPVAAGAYLYTLFFVTVPALA. Residues 224–243 lie on the Cytoplasmic side of the membrane; that stretch reads SVYNEKALKSQFDTSIYLQN. Residues 244–264 traverse the membrane as a helical segment; that stretch reads LFLYGYGAIFNFLGLVITAII. The Lumenal segment spans residues 265–280; it reads QGPSSFNILEGHSKAT. Residues 281 to 301 form a helical membrane-spanning segment; it reads MFLICNNAAQGILSSFFFKYA. The Cytoplasmic segment spans residues 302 to 321; the sequence is DTILKKYSSTIATIFTGVAS. A helical membrane pass occupies residues 322–342; that stretch reads AVLFGHTLTINFVLAISIVII. At 343 to 402 the chain is on the lumenal side; it reads SMHQYLSNQIKDEVPSSKIEMGDAHEHRSKESVVVNVSDSIATEAKHRHGTDERQPLLPV.

This sequence belongs to the nucleotide-sugar transporter family. CMP-Sialate:CMP antiporter (TC 2.A.7.12) subfamily.

It localises to the golgi apparatus membrane. Functionally, sugar transporter involved in the transport of CMP-sialic acid from the cytoplasm into the Golgi. May transport important nucleotide sugars such as CMP-Kdo (2-keto-3-deoxy-D-manno-octulosonic acid) in physiological conditions. This chain is CMP-sialic acid transporter 3, found in Oryza sativa subsp. indica (Rice).